The chain runs to 132 residues: Transcriptional regulator MraZ (132 aa).

SpoVT-AbrB domains are found at residues 5 to 47 (TYEH…SKDD) and 76 to 119 (TVEI…SKNK).

It belongs to the MraZ family. In terms of assembly, forms oligomers.

The protein localises to the cytoplasm. The protein resides in the nucleoid. The protein is Transcriptional regulator MraZ of Mycoplasma capricolum subsp. capricolum (strain California kid / ATCC 27343 / NCTC 10154).